We begin with the raw amino-acid sequence, 199 residues long: Nucleoside triphosphate pyrophosphatase (199 aa).

Aspartate 76 acts as the Proton acceptor in catalysis.

Belongs to the Maf family. A divalent metal cation serves as cofactor.

Its subcellular location is the cytoplasm. The enzyme catalyses a ribonucleoside 5'-triphosphate + H2O = a ribonucleoside 5'-phosphate + diphosphate + H(+). It carries out the reaction a 2'-deoxyribonucleoside 5'-triphosphate + H2O = a 2'-deoxyribonucleoside 5'-phosphate + diphosphate + H(+). In terms of biological role, nucleoside triphosphate pyrophosphatase. May have a dual role in cell division arrest and in preventing the incorporation of modified nucleotides into cellular nucleic acids. This Roseobacter denitrificans (strain ATCC 33942 / OCh 114) (Erythrobacter sp. (strain OCh 114)) protein is Nucleoside triphosphate pyrophosphatase.